The chain runs to 747 residues: Pentatricopeptide repeat-containing protein At5g39710 (747 aa).

15 PPR repeats span residues 133–167, 168–203, 204–238, 239–273, 274–308, 309–343, 344–378, 379–413, 414–448, 449–483, 484–518, 519–553, 554–588, 604–638, and 639–673; these read TSSV…GFMP, GVLS…QVSP, NVFT…GCLP, NVVT…GLEP, NLIS…GYSL, DEVT…GLTP, SVIT…GLCP, NERT…GFSP, SVVT…GLSP, DVVS…GIKP, DTIT…GLPP, DEFT…GVLP, DVVT…ESVP, EFKS…NHKP, and DGTA…GFLL.

The protein belongs to the PPR family. P subfamily.

This is Pentatricopeptide repeat-containing protein At5g39710 (EMB2745) from Arabidopsis thaliana (Mouse-ear cress).